The primary structure comprises 85 residues: Large ribosomal subunit protein uL29 (85 aa).

The protein belongs to the universal ribosomal protein uL29 family.

In Thermobifida fusca (strain YX), this protein is Large ribosomal subunit protein uL29.